The chain runs to 1238 residues: Lysine-specific demethylase JMJ703 (1238 aa).

The tract at residues 56–79 (EECQPSAAVSRSDTPCSTSGTQTC) is disordered. Polar residues predominate over residues 62–79 (AAVSRSDTPCSTSGTQTC). One can recognise a JmjN domain in the interval 154-195 (APVFYPTEEEFEDTLKYIESIRPMAEPYGICRIVPPSSWKPP). The interval 215-266 (KVDKLQNRKSSKKGRRGGMMKRRKLAESEENSATAHTQTGMQQSPERFGFEP) is disordered. The span at 221–238 (NRKSSKKGRRGGMMKRRK) shows a compositional bias: basic residues. Positions 245–259 (NSATAHTQTGMQQSP) are enriched in polar residues. Residues 348–514 (KYAQSGWNLN…IGHNAVELYR (167 aa)) form the JmjC domain. H394, E396, and H482 together coordinate Fe cation. 4 disordered regions span residues 699 to 725 (GPRRSYMSQASAVSLVSSSTSNEQKDE), 777 to 798 (YNGGLGGHKGSAPGLPVSSSPS), 834 to 863 (TGDSRSLLGEHHNRSPAMIHDGTNMKSSLE), and 910 to 978 (ASSQ…LQRT). Residues 706-719 (SQASAVSLVSSSTS) show a composition bias toward low complexity. A compositionally biased stretch (polar residues) spans 910-923 (ASSQQFVRTGPWTQ). The segment covering 924 to 936 (SASHEASSPSTSA) has biased composition (low complexity). Residues 964–978 (SFSNQQPNDGRLQRT) show a composition bias toward polar residues. Residues 1019-1077 (VVHRFKCSVEPLEIGVVLSGRLWSSSQAIFPKGFRSRVKYFSIVDPIQMAYYISEILDA) enclose the FYR N-terminal domain. In terms of domain architecture, FYR C-terminal spans 1079 to 1169 (MQGPLFMVKL…HICTEYWRSR (91 aa)).

The cofactor is Fe(2+). In terms of tissue distribution, expressed in roots, leaf sheaths, stems and panicles.

Its subcellular location is the nucleus. The enzyme catalyses N(6),N(6),N(6)-trimethyl-L-lysyl(4)-[histone H3] + 3 2-oxoglutarate + 3 O2 = L-lysyl(4)-[histone H3] + 3 formaldehyde + 3 succinate + 3 CO2. In terms of biological role, histone demethylase that demethylates 'Lys-4' (H3K4me) of histone H3 with a specific activity for H3K4me3, H3K4me2 and H3K4me1. No activity on H3K9me3/2/1, H3K27me3/2/1 and H3K36me3/2/1. Involved in the control of stem elongation by regulating methylation states of H3K4me3 on cytokinin oxidase (CKX) gene family, which may cause increased expression of CKX genes and reduced cytokinin levels. Prevents ectopic retrotransposition by regulating the levels of H3K4me3 in two non-LTR retrotransposons KARMA and LINE-1 (L1) and reinforcing their repressed states. The sequence is that of Lysine-specific demethylase JMJ703 (JMJ703) from Oryza sativa subsp. japonica (Rice).